The chain runs to 233 residues: Rano class II histocompatibility antigen, A beta chain (233 aa).

Residues 1–80 (DFVYQFKGLC…DTVCRYNYEE (80 aa)) form a beta-1 region. Residues 1-194 (DFVYQFKGLC…RAQSESAQSK (194 aa)) lie on the Extracellular side of the membrane. Asparagine 14 carries N-linked (GlcNAc...) asparagine glycosylation. Residues 81–184 (TEVPTSLRRL…SLESPVTVEW (104 aa)) are beta-2. One can recognise an Ig-like C1-type domain in the interval 93–181 (PNVAISLSRT…DHASLESPVT (89 aa)). The tract at residues 185 to 194 (RAQSESAQSK) is connecting peptide. A helical membrane pass occupies residues 195–215 (MLSGIGGLVLGVIFLGLGLFI). The Cytoplasmic portion of the chain corresponds to 216-233 (RHKRQKGPQGPPPAGLLQ).

It belongs to the MHC class II family.

It localises to the membrane. Involved in the presentation of foreign antigens to the immune system. The chain is Rano class II histocompatibility antigen, A beta chain (RT1-B) from Rattus norvegicus (Rat).